Consider the following 485-residue polypeptide: Catalase isozyme 1 (485 aa).

Catalysis depends on residues His58 and Asn131. Tyr341 is a heme binding site.

Belongs to the catalase family. As to quaternary structure, homotetramer. It depends on heme as a cofactor.

It is found in the peroxisome. The catalysed reaction is 2 H2O2 = O2 + 2 H2O. In terms of biological role, occurs in almost all aerobically respiring organisms and serves to protect cells from the toxic effects of hydrogen peroxide. This is Catalase isozyme 1 (CAT1) from Nicotiana plumbaginifolia (Leadwort-leaved tobacco).